Here is a 503-residue protein sequence, read N- to C-terminus: Aromatase (503 aa).

The helical transmembrane segment at 21–41 threads the bilayer; sequence VTVSAMPLLLIMGLLLLIWNC. The substrate site is built by D309 and M374. C437 contributes to the heme binding site.

The protein belongs to the cytochrome P450 family. Heme serves as cofactor.

The protein localises to the endoplasmic reticulum membrane. It localises to the microsome membrane. The catalysed reaction is testosterone + 3 reduced [NADPH--hemoprotein reductase] + 3 O2 = 17beta-estradiol + formate + 3 oxidized [NADPH--hemoprotein reductase] + 4 H2O + 4 H(+). The enzyme catalyses androst-4-ene-3,17-dione + 3 reduced [NADPH--hemoprotein reductase] + 3 O2 = estrone + formate + 3 oxidized [NADPH--hemoprotein reductase] + 4 H2O + 4 H(+). It catalyses the reaction androst-4-ene-3,17-dione + reduced [NADPH--hemoprotein reductase] + O2 = 19-hydroxyandrost-4-ene-3,17-dione + oxidized [NADPH--hemoprotein reductase] + H2O + H(+). It carries out the reaction 19-hydroxyandrost-4-ene-3,17-dione + reduced [NADPH--hemoprotein reductase] + O2 = 19-oxo-androst-4-ene-3,17-dione + oxidized [NADPH--hemoprotein reductase] + 2 H2O + H(+). The catalysed reaction is 19-oxo-androst-4-ene-3,17-dione + reduced [NADPH--hemoprotein reductase] + O2 = estrone + formate + oxidized [NADPH--hemoprotein reductase] + H2O + 2 H(+). The enzyme catalyses estrone + reduced [NADPH--hemoprotein reductase] + O2 = 2-hydroxyestrone + oxidized [NADPH--hemoprotein reductase] + H2O + H(+). It catalyses the reaction 17beta-hydroxy-5alpha-androstan-3-one + reduced [NADPH--hemoprotein reductase] + O2 = 17beta,19-dihydroxy-3-oxo-5alpha-androstanone + oxidized [NADPH--hemoprotein reductase] + H2O + H(+). It carries out the reaction 17beta,19-dihydroxy-3-oxo-5alpha-androstanone + reduced [NADPH--hemoprotein reductase] + O2 = 17beta-hydroxy-3,19-dioxo-5alpha-androstanone + oxidized [NADPH--hemoprotein reductase] + 2 H2O + H(+). The catalysed reaction is 17beta-hydroxy-3,19-dioxo-5alpha-androstanone + reduced [NADPH--hemoprotein reductase] + O2 = 17beta-hydroxy-3-oxo-19-nor-5alpha-androst-1-ene + formate + oxidized [NADPH--hemoprotein reductase] + H2O + 2 H(+). It functions in the pathway steroid hormone biosynthesis. In terms of biological role, a cytochrome P450 monooxygenase that catalyzes the conversion of C19 androgens, androst-4-ene-3,17-dione (androstenedione) and testosterone to the C18 estrogens, estrone and estradiol, respectively. Catalyzes three successive oxidations of C19 androgens: two conventional oxidations at C19 yielding 19-hydroxy and 19-oxo/19-aldehyde derivatives, followed by a third oxidative aromatization step that involves C1-beta hydrogen abstraction combined with cleavage of the C10-C19 bond to yield a phenolic A ring and formic acid. Alternatively, the third oxidative reaction yields a 19-norsteroid and formic acid. Converts dihydrotestosterone to delta1,10-dehydro 19-nordihydrotestosterone and may play a role in homeostasis of this potent androgen. Also displays 2-hydroxylase activity toward estrone. Mechanistically, uses molecular oxygen inserting one oxygen atom into a substrate, and reducing the second into a water molecule, with two electrons provided by NADPH via cytochrome P450 reductase (CPR; NADPH-ferrihemoprotein reductase). This is Aromatase (Cyp19a1) from Mus musculus (Mouse).